Consider the following 112-residue polypeptide: CENP-A recruiting complex protein mis19 (112 aa).

Component of the CENP-A recruiting complex composed of at least mis16, mis19, mis19 and mis20.

The protein localises to the chromosome. It is found in the centromere. The protein resides in the kinetochore. Functionally, component of the CENP-A recruiting complex that ensures the integrity of mitotic spindles through maintenance of kinetochore factors mis6/CENP-I and cnp1/CENP-A. Links mis16 and mis18 to recruit CENP-A through interacting with non-sense-mediated mRNA decay (NMD) factors and the SWI/SNF complex. Also links mis18 with the CCAN/mis6/ctf19 complex to promote CENP-A assembly. In Schizosaccharomyces pombe (strain 972 / ATCC 24843) (Fission yeast), this protein is CENP-A recruiting complex protein mis19.